Reading from the N-terminus, the 809-residue chain is Poly(A) polymerase (809 aa).

The interval 1 to 50 is disordered; sequence MNKNGGPPVANITTSSTTITSTTTTQAKSQLPSSLSVNNLHTTQGSTDQP. The segment covering 12-25 has biased composition (low complexity); that stretch reads ITTSSTTITSTTTT. Over residues 26 to 50 the composition is skewed to polar residues; that stretch reads QAKSQLPSSLSVNNLHTTQGSTDQP. ATP contacts are provided by residues 133–135, 146–148, D200, K262, Y271, and 280–281; these read FGS, DID, and GV. Mg(2+)-binding residues include D146, D148, and D200. 2 disordered regions span residues 529-760 and 785-809; these read FVKD…QQIQ and ISSSSETSQSKPPPKKPTISIIRGN. Basic and acidic residues predominate over residues 530 to 540; it reads VKDEGPEEPVK. Low complexity predominate over residues 572-655; it reads SPITTNINST…TPPTTTTINS (84 aa). Positions 656–665 are enriched in polar residues; that stretch reads VQPPSAQPTE. Residues 666–706 are compositionally biased toward low complexity; the sequence is NGSSTSNSPTSTSINNTALPPNPTTNSESTIETTITLPTTL. Polar residues predominate over residues 707–735; that stretch reads ESQTSTLKDSNEISTNGTAVATEPTITSP. Low complexity-rich tracts occupy residues 736-760 and 785-794; these read SVNINESSTSTSTTTTTTVTEQQIQ and ISSSSETSQS.

Belongs to the poly(A) polymerase family. It depends on Mg(2+) as a cofactor. Requires Mn(2+) as cofactor.

It localises to the nucleus. The enzyme catalyses RNA(n) + ATP = RNA(n)-3'-adenine ribonucleotide + diphosphate. In terms of biological role, polymerase that creates the 3'-poly(A) tail of mRNA's. May acquire specificity through interaction with a cleavage and polyadenylation factor. This chain is Poly(A) polymerase (papA), found in Dictyostelium discoideum (Social amoeba).